Consider the following 490-residue polypeptide: UDP-N-acetylmuramate--L-alanine ligase (490 aa).

ATP is bound at residue Gly-126–Thr-132.

It belongs to the MurCDEF family.

It is found in the cytoplasm. The catalysed reaction is UDP-N-acetyl-alpha-D-muramate + L-alanine + ATP = UDP-N-acetyl-alpha-D-muramoyl-L-alanine + ADP + phosphate + H(+). The protein operates within cell wall biogenesis; peptidoglycan biosynthesis. Functionally, cell wall formation. The protein is UDP-N-acetylmuramate--L-alanine ligase of Baumannia cicadellinicola subsp. Homalodisca coagulata.